We begin with the raw amino-acid sequence, 314 residues long: Probable tRNA pseudouridine synthase B (314 aa).

Positions 1–10 (MATRGRHRSR) are enriched in basic residues. The disordered stretch occupies residues 1-30 (MATRGRHRSRTSGTSSEPMTLRAPPDERDL). Aspartate 72 (nucleophile) is an active-site residue. One can recognise a PUA domain in the interval 237–314 (LPRVTIAPSA…LVVELDRMLV (78 aa)).

Belongs to the pseudouridine synthase TruB family. Type 2 subfamily.

The catalysed reaction is uridine(55) in tRNA = pseudouridine(55) in tRNA. In terms of biological role, could be responsible for synthesis of pseudouridine from uracil-55 in the psi GC loop of transfer RNAs. The polypeptide is Probable tRNA pseudouridine synthase B (Haloarcula marismortui (strain ATCC 43049 / DSM 3752 / JCM 8966 / VKM B-1809) (Halobacterium marismortui)).